The primary structure comprises 615 residues: Medium-chain acyl-CoA ligase ACSF2, mitochondrial (615 aa).

A mitochondrion-targeting transit peptide spans 1 to 42; sequence MAVYVGMLRVARLCARSPRVLGARVGLSRVWQEARLWGVRPL. Lys179 carries the post-translational modification N6-acetyllysine. Position 182 is an N6-acetyllysine; alternate (Lys182). Position 182 is an N6-succinyllysine; alternate (Lys182). An N6-acetyllysine modification is found at Lys199. Position 263–271 (263–271) interacts with ATP; the sequence is TSGTTGSPK. 2 positions are modified to N6-acetyllysine: Lys340 and Lys398. Residue Lys478 is modified to N6-succinyllysine. The ATP site is built by Asp493 and Arg508. Position 510 is an N6-acetyllysine (Lys510). 2 positions are modified to N6-acetyllysine; alternate: Lys544 and Lys570. Lys544 and Lys570 each carry N6-succinyllysine; alternate. Residue Lys599 coordinates ATP. Lys599 bears the N6-succinyllysine mark.

The protein belongs to the ATP-dependent AMP-binding enzyme family.

The protein localises to the mitochondrion. The enzyme catalyses a medium-chain fatty acid + ATP + CoA = a medium-chain fatty acyl-CoA + AMP + diphosphate. It carries out the reaction octanoate + ATP + CoA = octanoyl-CoA + AMP + diphosphate. Functionally, acyl-CoA synthases catalyze the initial reaction in fatty acid metabolism, by forming a thioester with CoA. Has some preference toward medium-chain substrates. Plays a role in adipocyte differentiation. In Bos taurus (Bovine), this protein is Medium-chain acyl-CoA ligase ACSF2, mitochondrial.